A 582-amino-acid chain; its full sequence is uncharacterized protein (582 aa).

Residues 1–23 are compositionally biased toward basic and acidic residues; the sequence is MAHEGSRQVRDRGVTRSKAEKVR. 3 disordered regions span residues 1–29, 110–133, and 147–221; these read MAHE…TVPV, AVAE…SWAQ, and LENF…SSAG. The residue at position 242 (S242) is a Phosphoserine. 2 disordered regions span residues 310–331 and 551–582; these read RPSA…SAHH and LSSG…PKPR. Over residues 311–320 the composition is skewed to polar residues; it reads PSASCQQQRA.

This is an uncharacterized protein from Homo sapiens (Human).